Reading from the N-terminus, the 180-residue chain is MIPKKAFVVKGTGVHKDKLASFELALRDAGIEKFNLVTVSSILPPNCSIVSRKEGLEELAPGQIVYCVMAKNQTNEPERMIAAAIGNAVPVDSNDYGYISEHHSFGEDERTAGIYAEDLAATMLATTLGIEFDADSAWGERERVYKASGHIFDTVHYCRCVKGDENGLWTTVVVSMVFVL.

S41 bears the Pyruvic acid (Ser) mark.

The protein belongs to the PdaD family. It depends on pyruvate as a cofactor.

It carries out the reaction L-arginine + H(+) = agmatine + CO2. This chain is Pyruvoyl-dependent arginine decarboxylase, found in Methanococcoides burtonii (strain DSM 6242 / NBRC 107633 / OCM 468 / ACE-M).